The sequence spans 99 residues: MRGDKATIKDYILDLQPETTDLHCYEQLGDSSDEEDTDGVDRPDGQAEQATSNYYIVTYCHSCDSTLRLCIHSTATDLRTLQQMLLGTLQVVCPGCARL.

The segment at 1–42 is E7 terminal domain; sequence MRGDKATIKDYILDLQPETTDLHCYEQLGDSSDEEDTDGVDR. An LXCXE motif; interaction with host RB1 and TMEM173/STING motif is present at residues 22-26; sequence LHCYE. A disordered region spans residues 26 to 47; the sequence is EQLGDSSDEEDTDGVDRPDGQA. Residues 60–96 fold into a zinc finger; that stretch reads CHSCDSTLRLCIHSTATDLRTLQQMLLGTLQVVCPGC. The Nuclear export signal motif lies at 78–86; it reads LRTLQQMLL.

The protein belongs to the papillomaviridae E7 protein family. Homodimer. Homooligomer. Interacts with host RB1; this interaction induces dissociation of RB1-E2F1 complex thereby disrupting RB1 activity. Interacts with host EP300; this interaction represses EP300 transcriptional activity. Interacts with protein E2; this interaction inhibits E7 oncogenic activity. Interacts with host TMEM173/STING; this interaction impairs the ability of TMEM173/STING to sense cytosolic DNA and promote the production of type I interferon (IFN-alpha and IFN-beta). Highly phosphorylated.

It is found in the host cytoplasm. Its subcellular location is the host nucleus. Functionally, plays a role in viral genome replication by driving entry of quiescent cells into the cell cycle. Stimulation of progression from G1 to S phase allows the virus to efficiently use the cellular DNA replicating machinery to achieve viral genome replication. E7 protein has both transforming and trans-activating activities. Induces the disassembly of the E2F1 transcription factor from RB1, with subsequent transcriptional activation of E2F1-regulated S-phase genes. Interferes with host histone deacetylation mediated by HDAC1 and HDAC2, leading to transcription activation. Also plays a role in the inhibition of both antiviral and antiproliferative functions of host interferon alpha. Interaction with host TMEM173/STING impairs the ability of TMEM173/STING to sense cytosolic DNA and promote the production of type I interferon (IFN-alpha and IFN-beta). This is Protein E7 from Human papillomavirus 52.